We begin with the raw amino-acid sequence, 242 residues long: Small ribosomal subunit protein uS2 (242 aa).

The protein belongs to the universal ribosomal protein uS2 family.

The polypeptide is Small ribosomal subunit protein uS2 (Aeromonas salmonicida (strain A449)).